The sequence spans 316 residues: Nucleotide-binding protein Sala_2050 (316 aa).

18-25 (GLSGAGKS) provides a ligand contact to ATP. GTP is bound at residue 69–72 (DSRS). Residues 283–316 (GYEPTLTHRNLDSAPQDGLEGKPPSAARASGGAR) form a disordered region.

It belongs to the RapZ-like family.

Its function is as follows. Displays ATPase and GTPase activities. The polypeptide is Nucleotide-binding protein Sala_2050 (Sphingopyxis alaskensis (strain DSM 13593 / LMG 18877 / RB2256) (Sphingomonas alaskensis)).